A 332-amino-acid polypeptide reads, in one-letter code: Anthranilate phosphoribosyltransferase (332 aa).

5-phospho-alpha-D-ribose 1-diphosphate contacts are provided by residues Gly79, 82 to 83 (GD), Ser87, 89 to 92 (NIST), 107 to 115 (KHGNRSVSS), and Ser119. Gly79 contributes to the anthranilate binding site. Ser91 is a binding site for Mg(2+). Asn110 contacts anthranilate. Arg165 serves as a coordination point for anthranilate. Mg(2+) is bound by residues Asp223 and Glu224.

It belongs to the anthranilate phosphoribosyltransferase family. As to quaternary structure, homodimer. Mg(2+) is required as a cofactor.

It catalyses the reaction N-(5-phospho-beta-D-ribosyl)anthranilate + diphosphate = 5-phospho-alpha-D-ribose 1-diphosphate + anthranilate. The protein operates within amino-acid biosynthesis; L-tryptophan biosynthesis; L-tryptophan from chorismate: step 2/5. Functionally, catalyzes the transfer of the phosphoribosyl group of 5-phosphorylribose-1-pyrophosphate (PRPP) to anthranilate to yield N-(5'-phosphoribosyl)-anthranilate (PRA). The protein is Anthranilate phosphoribosyltransferase of Yersinia pseudotuberculosis serotype O:3 (strain YPIII).